A 128-amino-acid chain; its full sequence is Large ribosomal subunit protein bL19 (128 aa).

This sequence belongs to the bacterial ribosomal protein bL19 family.

In terms of biological role, this protein is located at the 30S-50S ribosomal subunit interface and may play a role in the structure and function of the aminoacyl-tRNA binding site. This Paracidovorax citrulli (strain AAC00-1) (Acidovorax citrulli) protein is Large ribosomal subunit protein bL19.